The chain runs to 331 residues: HTH-type transcriptional regulator GntR (331 aa).

The HTH lacI-type domain maps to 6-60; the sequence is PVLQDVADRVGVTKMTVSRFLRNPEQVSVALRGKIAAALDELGYIPNRAPDILSN. A DNA-binding region (H-T-H motif) is located at residues 8–27; that stretch reads LQDVADRVGVTKMTVSRFLR.

It functions in the pathway carbohydrate acid metabolism; D-gluconate degradation [regulation]. Negative regulator for the gluconate utilization system GNT-I, the gntUKR operon. The sequence is that of HTH-type transcriptional regulator GntR (gntR) from Escherichia coli O6:H1 (strain CFT073 / ATCC 700928 / UPEC).